Consider the following 289-residue polypeptide: Splicing factor C9orf78 homolog (289 aa).

Basic residues predominate over residues Met1–Arg12. Disordered stretches follow at residues Met1–Val27 and Gly86–Arg109. Residues Arg5–Val58 are interaction with SNRNP200. Residues Ser15 and Ser17 each carry the phosphoserine modification. Tyr147 bears the Phosphotyrosine mark. Residues Leu232 to Lys283 show a composition bias toward basic and acidic residues. Residues Leu232 to Tyr289 are disordered. Thr253 carries the phosphothreonine modification. A Phosphoserine modification is found at Ser261.

Belongs to the TLS1 family. As to quaternary structure, component of the spliceosome. Interacts with SNRNP200; the interaction is direct. Interacts with PRPF8.

It localises to the nucleus. Its subcellular location is the chromosome. The protein localises to the centromere. Functionally, plays a role in pre-mRNA splicing by promoting usage of the upstream 3'-splice site at alternative NAGNAG splice sites; these are sites featuring alternative acceptor motifs separated by only a few nucleotides. May also modulate exon inclusion events. Plays a role in spliceosomal remodeling by displacing WBP4 from SNRNP200 and may act to inhibit SNRNP200 helicase activity. Binds U5 snRNA. Required for proper chromosome segregation. Not required for splicing of shelterin components. The protein is Splicing factor C9orf78 homolog of Pongo abelii (Sumatran orangutan).